A 283-amino-acid polypeptide reads, in one-letter code: MARHDPNPFADEEINPFANHTSVPPASNSYLKPLPPEPYDRGATVDIPLDSGNDLRAKEMELQAKENELKRKEQELKRREDAIARTGVVIEEKNWPEFFPLIHHDIPNEIPIHLQKIQYVAFTTLLGLVGCLLWNIVAVTVAWIKGEGPTIWLLSIIYFLAGVPGAYVLWYRPLYRATRTDSALKFGAFFFFYVFHIAFCGFAAVAPPVIFQGKSLTGFLPAIELLTTNAAVGIMYFIGAGFFCIETLLNIWVIQQVYAYFRGSGKAAEMKREATKSTLMRAL.

Positions Met1–Ile47 are disordered. At Met1 to Thr123 the chain is on the cytoplasmic side. The segment covering Ala18–Tyr30 has biased composition (polar residues). The stretch at Asp50–Gly87 forms a coiled coil. The next 4 helical transmembrane spans lie at Thr124–Ile144, Ile151–Tyr171, Phe186–Ala206, and Ile234–Ile254. Over Gln255–Leu283 the chain is Cytoplasmic.

The protein belongs to the SCAMP family.

It localises to the cell membrane. It is found in the cytoplasmic vesicle. The protein resides in the secretory vesicle membrane. Functionally, probably involved in membrane trafficking. This chain is Secretory carrier-associated membrane protein 2 (SCAMP2), found in Arabidopsis thaliana (Mouse-ear cress).